We begin with the raw amino-acid sequence, 196 residues long: Peroxynitrite isomerase (196 aa).

Positions 46–52 (GVWRGRG) match the GXWXGXG motif. His-186 contacts heme b.

This sequence belongs to the nitrobindin family. In terms of assembly, homodimer. Requires heme b as cofactor.

The catalysed reaction is peroxynitrite = nitrate. It participates in nitrogen metabolism. In terms of biological role, heme-binding protein able to scavenge peroxynitrite and to protect free L-tyrosine against peroxynitrite-mediated nitration, by acting as a peroxynitrite isomerase that converts peroxynitrite to nitrate. Therefore, this protein likely plays a role in peroxynitrite sensing and in the detoxification of reactive nitrogen and oxygen species (RNS and ROS, respectively). Is able to bind nitric oxide (NO) in vitro, but may act as a sensor of peroxynitrite levels in vivo. In Salinispora tropica (strain ATCC BAA-916 / DSM 44818 / JCM 13857 / NBRC 105044 / CNB-440), this protein is Peroxynitrite isomerase.